Consider the following 492-residue polypeptide: MDPYKHRPSSGSNSSFWTTNSGAPVWNNNSALTVGQRGPILLEDYHLIEKLAQFDRERIPERVVHARGASAKGFFEVTHDVSHLTCADFLRAPGVQTPVIVRFSTVVHERGSPETLRDPRGFAVKFYTREGNFDLVGNNMPVFFIRDGMKFPDMVHAFKPNPKTNLQENWRIVDFFSHHPESLHMFTFLFDDVGIPLNYRHMEGFGVNTYSLINRDGKPHLVKFHWKPTCGVKCLLDNEAVTVGGTCHSHATKDLYDSIAAGNYPEWKLYIQTIDLDHEDKFDFDPLDVTKTWPEDIIPLQPVGRMVLNKNVDNFFAENEQIAFCPAISVPAIHYSDDKLLQTRIFSYADTQRHRLGPNYLMLPVNAPKCAHHNNHHDGFMNFMHRDEEVNYFPSRFDPARHAEKVPIPPRVLTRCREKCIIQKENNFKQAGERYRSFDPARQDRFIQRWVDALTHPRVTHEHRTIWISYWSQCDAALGQKLPSRLNLKPSM.

Catalysis depends on residues H65 and N138. Y348 serves as a coordination point for heme.

This sequence belongs to the catalase family. Homotetramer. It depends on heme as a cofactor. As to expression, scutella, milky endosperm of immature kernels, leaves and epicotyls.

The protein localises to the peroxisome. The catalysed reaction is 2 H2O2 = O2 + 2 H2O. Functionally, occurs in almost all aerobically respiring organisms and serves to protect cells from the toxic effects of hydrogen peroxide. This chain is Catalase isozyme 1 (CAT1), found in Zea mays (Maize).